The following is a 440-amino-acid chain: 6-phospho-alpha-glucosidase (440 aa).

4–70 (FSIVVAGGGS…PDINFVYTTD (67 aa)) is an NAD(+) binding site. Substrate-binding residues include Arg93 and Asn147. Mn(2+) is bound at residue Cys169. Asp170 functions as the Proton donor in the catalytic mechanism. His200 provides a ligand contact to Mn(2+). Tyr263 serves as the catalytic Proton acceptor. Arg283 provides a ligand contact to substrate.

It belongs to the glycosyl hydrolase 4 family. In terms of assembly, homodimer. It depends on NAD(+) as a cofactor. Requires Mn(2+) as cofactor.

It participates in glycan degradation; palatinose degradation. Its function is as follows. In vitro, readily hydrolyzes p-nitrophenyl-alpha-D-glucopyranoside 6-phosphate (pNPalphaG6P), a chromogenic analog of the phosphorylated isomers of sucrose. In vivo, is probably involved in the degradation of the 6-phosphate derivatives of the sucrose isomers trehalulose, turanose, maltulose and palatinose, catalyzing their hydrolysis into glucose 6-phosphate (G6P) and fructose, which allows the bacterium to use these sugars as energy sources for growth. Is not able to hydrolyze the C2 or C4 chromogenic stereomers (i.e. pNPalpha-mannopyranoside-6P and pNPalpha-galactopyranoside-6P, respectively). In Leptotrichia buccalis (strain ATCC 14201 / DSM 1135 / JCM 12969 / NCTC 10249 / C-1013-b), this protein is 6-phospho-alpha-glucosidase (pagL).